The chain runs to 352 residues: MDYQVSSPTYDIDYYTSEPCQKINVKQIAARLLPPLYSLVFIFGFVGNILVVLILINCKRLKSMTDIYLLNLAISDLLFLLTVPFWAHYAAAQWDFGNTMCQLLTGLYFIGFFSGIFFIILLTIDRYLAIVHAVFALKARTVTFGVVTSVITWVVAVFASLPGIIFTRSQREGLHYTCSSHFPYSQYQFWKNFQTLKMVILGLVLPLLVMVICYSGILKTLLRCRNEKKRHRAVRLIFTIMIVYFLFWAPYNIVLLLNTFQEFFGLNNCSSSNRLDQAMQVTETLGMTHCCINPIIYAFVGEKFRNYLLVFFQKHIAKRFCKCCSIFQQEAPERASSVYTRSTAEQEISVGL.

At 1–30 (MDYQVSSPTYDIDYYTSEPCQKINVKQIAA) the chain is on the extracellular side. Tyrosine 3 carries the post-translational modification Sulfotyrosine. O-linked (GalNAc...) serine glycans are attached at residues serine 6 and serine 7. Sulfotyrosine is present on residues tyrosine 10, tyrosine 14, and tyrosine 15. 2 cysteine pairs are disulfide-bonded: cysteine 20/cysteine 269 and cysteine 101/cysteine 178. A helical transmembrane segment spans residues 31-58 (RLLPPLYSLVFIFGFVGNILVVLILINC). Topologically, residues 59-68 (KRLKSMTDIY) are cytoplasmic. Residues 69–89 (LLNLAISDLLFLLTVPFWAHY) form a helical membrane-spanning segment. Residues 90–102 (AAAQWDFGNTMCQ) are Extracellular-facing. Residues 103–124 (LLTGLYFIGFFSGIFFIILLTI) form a helical membrane-spanning segment. Over 125–141 (DRYLAIVHAVFALKART) the chain is Cytoplasmic. A helical membrane pass occupies residues 142–166 (VTFGVVTSVITWVVAVFASLPGIIF). Over 167–198 (TRSQREGLHYTCSSHFPYSQYQFWKNFQTLKM) the chain is Extracellular. Residues 199–218 (VILGLVLPLLVMVICYSGIL) form a helical membrane-spanning segment. The Cytoplasmic portion of the chain corresponds to 219–235 (KTLLRCRNEKKRHRAVR). Residues 236 to 260 (LIFTIMIVYFLFWAPYNIVLLLNTF) traverse the membrane as a helical segment. Topologically, residues 261 to 277 (QEFFGLNNCSSSNRLDQ) are extracellular. Residues 278-301 (AMQVTETLGMTHCCINPIIYAFVG) form a helical membrane-spanning segment. At 302–352 (EKFRNYLLVFFQKHIAKRFCKCCSIFQQEAPERASSVYTRSTAEQEISVGL) the chain is on the cytoplasmic side. 3 S-palmitoyl cysteine lipidation sites follow: cysteine 321, cysteine 323, and cysteine 324. 4 positions are modified to phosphoserine; by BARK1: serine 336, serine 337, serine 342, and serine 349.

The protein belongs to the G-protein coupled receptor 1 family. As to quaternary structure, interacts with PRAF2. Efficient ligand binding to CCL3/MIP-1alpha and CCL4/MIP-1beta requires sulfation, O-glycosylation and sialic acid modifications. Glycosylation on Ser-6 is required for efficient binding of CCL4. Interacts with GRK2. Interacts with ARRB1 and ARRB2. Interacts with CNIH4. Interacts with S100A4; this interaction stimulates T-lymphocyte chemotaxis. Post-translationally, sulfated on at least 2 of the N-terminal tyrosines. Sulfation is required for efficient binding of the chemokines, CCL3 and CCL4. In terms of processing, palmitoylation in the C-terminal is important for cell surface expression. Phosphorylation on serine residues in the C-terminal is stimulated by binding CC chemokines especially by APO-RANTES. Post-translationally, O-glycosylated, but not N-glycosylated. Ser-6 appears to be the major site even if Ser-7 may be also O-glycosylated. Also sialylated glycans present which contribute to chemokine binding. Thr-16 and Ser-17 may also be glycosylated and, if so, with small moieties such as a T-antigen.

The protein localises to the cell membrane. Receptor for a number of inflammatory CC-chemokines including CCL3/MIP-1-alpha, CCL4/MIP-1-beta and RANTES and subsequently transduces a signal by increasing the intracellular calcium ion level. May play a role in the control of granulocytic lineage proliferation or differentiation. Participates in T-lymphocyte migration to the infection site by acting as a chemotactic receptor. This chain is C-C chemokine receptor type 5 (CCR5), found in Macaca arctoides (Stump-tailed macaque).